We begin with the raw amino-acid sequence, 217 residues long: Ras-related protein Rab-19 (217 aa).

Residues Ser-26, Val-28, Gly-29, Lys-30, Thr-31, Cys-32, Tyr-42, Ser-43, Glu-44, Ser-45, and Thr-49 each coordinate GTP. Position 31 (Thr-31) interacts with Mg(2+). The Switch 1 signature appears at 39–54 (SGVYSESQQNTIGVDF). The Mg(2+) site is built by Thr-49 and Asp-72. The Switch 2 motif lies at 74–89 (AGQERFRTITQSYYRS). The GTP site is built by Gly-75, Asn-130, Lys-131, Asp-133, Ser-161, Ala-162, and Lys-163. Residues Cys-215 and Cys-217 are each lipidated (S-geranylgeranyl cysteine). A Cysteine methyl ester modification is found at Cys-217.

This sequence belongs to the small GTPase superfamily. Rab family. Mg(2+) serves as cofactor. Expressed in a tissue-specific manner. Detected at high levels in intestine, lung and spleen, and at a lower level in kidney.

Its subcellular location is the cell membrane. The enzyme catalyses GTP + H2O = GDP + phosphate + H(+). Its activity is regulated as follows. Regulated by guanine nucleotide exchange factors (GEFs) which promote the exchange of bound GDP for free GTP. Regulated by GTPase activating proteins (GAPs) which increase the GTP hydrolysis activity. Inhibited by GDP dissociation inhibitors (GDIs). Its function is as follows. The small GTPases Rab are key regulators of intracellular membrane trafficking, from the formation of transport vesicles to their fusion with membranes. Rabs cycle between an inactive GDP-bound form and an active GTP-bound form that is able to recruit to membranes different set of downstream effectors directly responsible for vesicle formation, movement, tethering and fusion. This chain is Ras-related protein Rab-19, found in Mus musculus (Mouse).